We begin with the raw amino-acid sequence, 107 residues long: Integration host factor subunit beta (107 aa).

The disordered stretch occupies residues 56 to 107 (RPSRVGRNPKSGEKVLVPEKHVPHFKPGKELRERVDRNAGEPLKADAADDDL). The span at 65–107 (KSGEKVLVPEKHVPHFKPGKELRERVDRNAGEPLKADAADDDL) shows a compositional bias: basic and acidic residues.

Belongs to the bacterial histone-like protein family. In terms of assembly, heterodimer of an alpha and a beta chain.

This protein is one of the two subunits of integration host factor, a specific DNA-binding protein that functions in genetic recombination as well as in transcriptional and translational control. The polypeptide is Integration host factor subunit beta (Paraburkholderia phymatum (strain DSM 17167 / CIP 108236 / LMG 21445 / STM815) (Burkholderia phymatum)).